A 551-amino-acid chain; its full sequence is Tetrachloroethene reductive dehalogenase (551 aa).

The segment at residues 1 to 39 is a signal peptide (tat-type signal); it reads MGEINRRNFLKVSILGAAAAAVASASAVKGMVSPLVADA. A 4Fe-4S ferredoxin-type 1 domain is found at 411 to 440; sequence PRKFGVREFCRLCKKCADACPAQAISHEKD. [4Fe-4S] cluster-binding residues include Cys420, Cys423, Cys426, Cys430, Cys467, Cys478, Cys481, and Cys485. Positions 478-496 constitute a 4Fe-4S ferredoxin-type 2 domain; the sequence is CSNCVAVCSWNKVETWNHD.

It belongs to the PceA family. [4Fe-4S] cluster is required as a cofactor. Requires corrinoid as cofactor. Post-translationally, predicted to be exported by the Tat system. The position of the signal peptide cleavage has not been experimentally proven.

It localises to the cell membrane. It carries out the reaction trichloroethene + chloride + A + H(+) = tetrachloroethene + AH2. The enzyme catalyses trichloroethene + AH2 = (Z)-1,2-dichloroethene + chloride + A + H(+). Its function is as follows. Catalyzes the reductive dechlorination of tetrachloroethene (PCE) to trichloroethene (TCE) and of trichloroethene to cis-1,2-dichloroethene (DCE). This chain is Tetrachloroethene reductive dehalogenase, found in Desulfitobacterium hafniense (Desulfitobacterium frappieri).